The chain runs to 569 residues: MLEPIAYDIGRLCKEEDKELTPKLIDIDVIGLSQEKIFYGIMTPFRCPNSKSIYELRKSYVKADGIKMPFDTFRELTSIFKKSFIGTVKYKGNVFKYQILNFGKHVDLIELEDADLYIIADGRRLIERKELQIIPKIREKISPNSAIYSPAVFPWEIPLLAYIGVDYFDDSLAKLYASMGYKFTKNRAVKVDSFSFEELYNNNKKVYEEILEEVRIAIKNGFLRNVVEETAVSHPYLWANYRRYEPDLRNIPLSKENKIIVTTNINIPEVKKYLERLDNYEPYSNIIVLLPCSSKKPYSISQSHQKFIKAIKSAKVVVEEVILTSPYGLVPRALERLVNYDIPVTGEWSFEEIELINNCLKNFLKKVKEKFDDYIVIAHLPEHYLEILELDDIVITSKGNPTSEEALKNLTDTLKKYKELTKSKDINKKGQRIHNIQQLAEFQFGINFIPNEIFINHKGQIFTKINNKNQQIASINPKNGLLILTLSGGELLWNSGGKDINYIEVNYEIKKGSLFPPGFVDCNENISYNDEVVLIKDDTFLGIGRALMSGFEMKKAKHGALVNIRNVKS.

The region spanning 495 to 569 is the PUA domain; the sequence is SGGKDINYIE…ALVNIRNVKS (75 aa).

This sequence belongs to the archaeosine synthase type 1 family. As to quaternary structure, homodimer.

The enzyme catalyses 7-cyano-7-carbaguanosine(15) in tRNA + L-glutamine + H2O = archaeosine(15) in tRNA + L-glutamate. The protein operates within tRNA modification; archaeosine-tRNA biosynthesis. In terms of biological role, is responsible for the final step in the biosynthesis of archaeosine, a modified nucleoside present in the dihydrouridine loop (D-loop) of archaeal tRNA. Catalyzes the conversion of 7-cyano-7-deazaguanine (preQ0)-modified tRNA to archaeosine-tRNA, transforming a nitrile group to a formamidine group. Can use either glutamine, asparagine or ammonium as amino donor. In Methanocaldococcus jannaschii (strain ATCC 43067 / DSM 2661 / JAL-1 / JCM 10045 / NBRC 100440) (Methanococcus jannaschii), this protein is Archaeosine synthase.